Consider the following 255-residue polypeptide: F-box/SPRY domain-containing protein 1 (255 aa).

Positions 3–51 (DPVAALCNYNVLEVIFSYLELEDLNHCSQVCKSWYHFLNDENSDVWRWH) constitute an F-box domain. The B30.2/SPRY domain maps to 61–253 (LKSDLLASVS…VSMVYLGTPL (193 aa)).

This sequence belongs to the FBXO45/Fsn family. As to quaternary structure, component of an E3 ubiquitin ligase complex composed of hiw and Fsn.

The protein localises to the synapse. Its pathway is protein modification; protein ubiquitination. Functionally, required in the presynaptic motoneuron to down-regulate the levels of wnd and restrain synaptic terminal growth at the neuromuscular junction (NMJ). This chain is F-box/SPRY domain-containing protein 1, found in Drosophila yakuba (Fruit fly).